We begin with the raw amino-acid sequence, 128 residues long: MGLIWGLFSVIIASVAQLSLGFAASHLPPMTHLWDFIAALLAFGLDARILLLGLLGYLLSVFCWYKTLHKLALSKAYALLSMSYVLVWIASMVLPGREGTFSLKALLGVACIMSGLMLIFLPTTKQRY.

The Cytoplasmic segment spans residues 1–2 (MG). A helical membrane pass occupies residues 3–23 (LIWGLFSVIIASVAQLSLGFA). At 24–35 (ASHLPPMTHLWD) the chain is on the periplasmic side. Residues 36–56 (FIAALLAFGLDARILLLGLLG) traverse the membrane as a helical segment. Residues 57–75 (YLLSVFCWYKTLHKLALSK) lie on the Cytoplasmic side of the membrane. A helical membrane pass occupies residues 76-96 (AYALLSMSYVLVWIASMVLPG). Residues 97 to 100 (REGT) are Periplasmic-facing. The helical transmembrane segment at 101–121 (FSLKALLGVACIMSGLMLIFL) threads the bilayer. At 122–128 (PTTKQRY) the chain is on the cytoplasmic side.

The protein belongs to the ArnF family. As to quaternary structure, heterodimer of ArnE and ArnF.

It localises to the cell inner membrane. It participates in bacterial outer membrane biogenesis; lipopolysaccharide biosynthesis. In terms of biological role, translocates 4-amino-4-deoxy-L-arabinose-phosphoundecaprenol (alpha-L-Ara4N-phosphoundecaprenol) from the cytoplasmic to the periplasmic side of the inner membrane. The sequence is that of Probable 4-amino-4-deoxy-L-arabinose-phosphoundecaprenol flippase subunit ArnF from Shigella flexneri serotype 5b (strain 8401).